A 330-amino-acid chain; its full sequence is 2-keto-3-deoxygluconate permease (330 aa).

10 consecutive transmembrane segments (helical) span residues 10–30 (VPGG…TFAP), 42–62 (ALIT…GATI), 77–97 (LLLG…QFIP), 100–120 (GIQS…VMNE), 140–160 (GAFA…TFGV), 163–183 (LAAF…LGCI), 200–220 (PAII…GMLI), 224–244 (LLGI…LFLL), 254–274 (VAGV…YALA), and 289–309 (AIIA…TVWV).

The protein belongs to the KdgT transporter family.

The protein resides in the cell membrane. The catalysed reaction is 2-dehydro-3-deoxy-D-gluconate(in) + H(+)(in) = 2-dehydro-3-deoxy-D-gluconate(out) + H(+)(out). Its function is as follows. Catalyzes the proton-dependent uptake of 2-keto-3-deoxygluconate (KDG) into the cell. The sequence is that of 2-keto-3-deoxygluconate permease from Bacillus subtilis (strain 168).